A 358-amino-acid polypeptide reads, in one-letter code: Phenylalanine--tRNA ligase alpha subunit (358 aa).

E279 is a binding site for Mg(2+).

It belongs to the class-II aminoacyl-tRNA synthetase family. Phe-tRNA synthetase alpha subunit type 1 subfamily. In terms of assembly, tetramer of two alpha and two beta subunits. Mg(2+) is required as a cofactor.

Its subcellular location is the cytoplasm. It carries out the reaction tRNA(Phe) + L-phenylalanine + ATP = L-phenylalanyl-tRNA(Phe) + AMP + diphosphate + H(+). The polypeptide is Phenylalanine--tRNA ligase alpha subunit (Variovorax paradoxus (strain S110)).